Consider the following 507-residue polypeptide: AMSH-like ubiquitin thioesterase 3 (507 aa).

Positions 73 to 107 (QERLGSRKRLRAVINELESLKPEFNQLVDKLNRVE) form a coiled coil. Disordered regions lie at residues 133–162 (HKAS…LTSS) and 214–242 (PSNT…LNGD). Composition is skewed to polar residues over residues 146 to 162 (LPTS…LTSS), 214 to 224 (PSNTDWGSADN), and 232 to 242 (PSSSSASLNGD). An MPN domain is found at 333–463 (LHVPVRIMDD…IFHLSDPSGV (131 aa)). Zn(2+) is bound by residues histidine 411, histidine 413, aspartate 424, histidine 426, cysteine 469, histidine 475, and histidine 477. The JAMM motif motif lies at 411–424 (HTHPTQTCFMSSVD).

This sequence belongs to the peptidase M67C family. In terms of assembly, interacts with PATL1 and PATL2. May also bind to HSC70-1, HSC70-3, VHA-A, BGLU23 and EPSIN1. Interacts with BRO1/ALIX. Zn(2+) is required as a cofactor.

Its subcellular location is the membrane. It localises to the cytoplasm. The protein localises to the vacuole membrane. It is found in the late endosome. Its function is as follows. Zinc metalloprotease that cleaves 'Lys-48'- and 'Lys-63'-linked polyubiquitin chains, but is not implicated in protein degradation by the 26S proteasome, deneddylation, or desumoylation. Required for intracellular trafficking (e.g. trafficking from the Golgi to the vacuole and the vacuolar trafficking of endocytosed cargo), endocytosis and vacuole biogenesis. This is AMSH-like ubiquitin thioesterase 3 (AMSH3) from Arabidopsis thaliana (Mouse-ear cress).